The chain runs to 145 residues: RNAP inhibitory protein (145 aa).

The segment at His-110 to Ser-123 is C-terminal tail, binds in the RNAP DNA-binding channel.

It belongs to the viral ORF131/RIP family. In terms of assembly, interacts with host RNA polymerase (RNAP) subunits Rpo1N and Rpo2.

The protein localises to the virion. Plays a role in the inhibition of global transcription by interacting with the RNA polymerase (RNAP) clamp, locking it in a fixed position and inhibiting the formation and/or stability of the pre-initiation complex (PIC). Also overlaps with the transcription factor B binding site; overall RIP probably interferes with DNA loading onto RNAP but does not displace DNA once it is loaded. May play a role in virus particle assembly, possibly by dissociating active RNAP from the virus genome. This chain is RNAP inhibitory protein, found in Acidianus two-tailed virus (ATV).